The chain runs to 567 residues: Membrane protein insertase YidC (567 aa).

A helical transmembrane segment spans residues 3-23 (IQRIVLFAGLAIVSYLMVLAW). The interval 32–80 (TEQVAEAQSSSDSSATNSTDDMILPEDNNAGGEEFATPETGSLASTSAN) is disordered. The span at 40–52 (SSSDSSATNSTDD) shows a compositional bias: low complexity. Residues 70–80 (ETGSLASTSAN) show a composition bias toward polar residues. 5 helical membrane passes run 354-374 (FGWLFFISLPLFYILEWFYGL), 378-398 (WGVAIILLTVLVKAVFFHLSA), 445-465 (GGCLPILVQMPVFISLYWVLF), 485-505 (MDPYFILPILMGASMFIQMSL), and 522-542 (PLIFTVFFLWFPAGLVLYWLV).

The protein belongs to the OXA1/ALB3/YidC family. Type 1 subfamily. In terms of assembly, interacts with the Sec translocase complex via SecD. Specifically interacts with transmembrane segments of nascent integral membrane proteins during membrane integration.

The protein resides in the cell inner membrane. In terms of biological role, required for the insertion and/or proper folding and/or complex formation of integral membrane proteins into the membrane. Involved in integration of membrane proteins that insert both dependently and independently of the Sec translocase complex, as well as at least some lipoproteins. Aids folding of multispanning membrane proteins. This is Membrane protein insertase YidC from Marinobacter nauticus (strain ATCC 700491 / DSM 11845 / VT8) (Marinobacter aquaeolei).